The chain runs to 450 residues: Tubulin alpha chain (450 aa).

Glutamine 11 is a binding site for GTP. Lysine 40 carries the N6-acetyllysine modification. The GTP site is built by glutamate 71, serine 140, glycine 144, threonine 145, threonine 179, asparagine 206, and asparagine 228. Glutamate 71 lines the Mg(2+) pocket. The active site involves glutamate 254.

It belongs to the tubulin family. In terms of assembly, dimer of alpha and beta chains. A typical microtubule is a hollow water-filled tube with an outer diameter of 25 nm and an inner diameter of 15 nM. Alpha-beta heterodimers associate head-to-tail to form protofilaments running lengthwise along the microtubule wall with the beta-tubulin subunit facing the microtubule plus end conferring a structural polarity. Microtubules usually have 13 protofilaments but different protofilament numbers can be found in some organisms and specialized cells. Mg(2+) is required as a cofactor. In terms of processing, undergoes a tyrosination/detyrosination cycle, the cyclic removal and re-addition of a C-terminal tyrosine residue by the enzymes tubulin tyrosine carboxypeptidase (TTCP) and tubulin tyrosine ligase (TTL), respectively. Post-translationally, acetylation of alpha chains at Lys-40 stabilizes microtubules and affects affinity and processivity of microtubule motors. This modification has a role in multiple cellular functions, ranging from cell motility, cell cycle progression or cell differentiation to intracellular trafficking and signaling.

Its subcellular location is the cytoplasm. It localises to the cytoskeleton. It carries out the reaction GTP + H2O = GDP + phosphate + H(+). In terms of biological role, tubulin is the major constituent of microtubules, a cylinder consisting of laterally associated linear protofilaments composed of alpha- and beta-tubulin heterodimers. Microtubules grow by the addition of GTP-tubulin dimers to the microtubule end, where a stabilizing cap forms. Below the cap, tubulin dimers are in GDP-bound state, owing to GTPase activity of alpha-tubulin. The sequence is that of Tubulin alpha chain from Lepidoglyphus destructor (Storage mite).